Reading from the N-terminus, the 171-residue chain is Large ribosomal subunit protein uL10 (171 aa).

It belongs to the universal ribosomal protein uL10 family. Part of the ribosomal stalk of the 50S ribosomal subunit. The N-terminus interacts with L11 and the large rRNA to form the base of the stalk. The C-terminus forms an elongated spine to which L12 dimers bind in a sequential fashion forming a multimeric L10(L12)X complex.

Forms part of the ribosomal stalk, playing a central role in the interaction of the ribosome with GTP-bound translation factors. This Erythrobacter litoralis (strain HTCC2594) protein is Large ribosomal subunit protein uL10.